A 125-amino-acid polypeptide reads, in one-letter code: MVLTDAEELRSPVITSDMSFFDLESNHSSDSVHLLCEKYTHKLPIESESQTTFRLAPTKQRLYRQSTLYVPLSLKQRVFLFTERVKSIWAGLPRCKPNKYFKVAFALAVLTPLAIWIFYIDFRVH.

The chain crosses the membrane as a helical span at residues 100-120 (YFKVAFALAVLTPLAIWIFYI).

The protein localises to the membrane. This is an uncharacterized protein from Saccharomyces cerevisiae (strain ATCC 204508 / S288c) (Baker's yeast).